The chain runs to 60 residues: Anionic antimicrobial peptide 2 (60 aa).

In terms of tissue distribution, hemolymph.

It is found in the secreted. Functionally, antimicrobial protein. Has antibacterial activity against the Gram-positive bacteria M.luteus (MIC=86.6 uM), L.monocytogenes (MIC=86.6 uM), and S.lutea (MIC=86.6 uM). Lacks antibacterial activity against the Gram-positive bacteria B.circulans and S.aureus, and the Gram-negative bacteria E.coli D31, E.coli ATCC 25922, and S.typhimurium. Has antifungal activity against P.pastoris (MIC=86.6 uM) and P.stipitis (MIC=90.9 uM), but lacks antifungal activity against A.niger, C.albicans, C.albidus, C.fructus, C.wickerhamii, F.oxysporum, S.cerevisiae, S.pombe, T.harzianum, and Z.marxianus. This Galleria mellonella (Greater wax moth) protein is Anionic antimicrobial peptide 2.